The primary structure comprises 513 residues: ATP synthase subunit alpha (513 aa).

169–176 (GDRQTGKT) serves as a coordination point for ATP.

Belongs to the ATPase alpha/beta chains family. In terms of assembly, F-type ATPases have 2 components, CF(1) - the catalytic core - and CF(0) - the membrane proton channel. CF(1) has five subunits: alpha(3), beta(3), gamma(1), delta(1), epsilon(1). CF(0) has three main subunits: a(1), b(2) and c(9-12). The alpha and beta chains form an alternating ring which encloses part of the gamma chain. CF(1) is attached to CF(0) by a central stalk formed by the gamma and epsilon chains, while a peripheral stalk is formed by the delta and b chains.

The protein localises to the cell inner membrane. The catalysed reaction is ATP + H2O + 4 H(+)(in) = ADP + phosphate + 5 H(+)(out). Functionally, produces ATP from ADP in the presence of a proton gradient across the membrane. The alpha chain is a regulatory subunit. This is ATP synthase subunit alpha from Actinobacillus pleuropneumoniae serotype 7 (strain AP76).